A 134-amino-acid polypeptide reads, in one-letter code: Large ribosomal subunit protein eL32 (134 aa).

This sequence belongs to the eukaryotic ribosomal protein eL32 family.

The sequence is that of Large ribosomal subunit protein eL32 (rpl32e) from Picrophilus torridus (strain ATCC 700027 / DSM 9790 / JCM 10055 / NBRC 100828 / KAW 2/3).